A 647-amino-acid chain; its full sequence is Endogenous retrovirus group K member 8 Gag polyprotein (647 aa).

Gly-2 carries N-myristoyl glycine lipidation. The disordered stretch occupies residues 165–264; the sequence is GKGPELVGPS…APPSRQGSEL (100 aa). Pro residues predominate over residues 232-247; the sequence is GMPPAPQGREPYPQPP. 2 consecutive CCHC-type zinc fingers follow at residues 544–561 and 580–597; these read GKCY…NCPV and DLCP…QCRS. Positions 598–641 are disordered; that stretch reads KFDKNGQPLSGNEQRGQPQAPQQTGAFPIQPFVPQGFQDNNPHC. Residues 604–622 are compositionally biased toward polar residues; that stretch reads QPLSGNEQRGQPQAPQQTG.

Belongs to the beta type-B retroviral Gag protein family. HERV class-II K(HML-2) gag subfamily. Myristoylation is essential for retroviral assembly. Alteration of the glycine residue leads to a block in the budding of particles and an accumulation of Gag inside the cell. Post-translationally, specific enzymatic cleavages may yield mature proteins.

It localises to the cell membrane. Functionally, the products of the Gag polyproteins of infectious retroviruses perform highly complex orchestrated tasks during the assembly, budding, maturation, and infection stages of the viral replication cycle. During viral assembly, the proteins form membrane associations and self-associations that ultimately result in budding of an immature virion from the infected cell. Gag precursors also function during viral assembly to selectively bind and package two plus strands of genomic RNA. Endogenous Gag proteins may have kept, lost or modified their original function during evolution. The sequence is that of Endogenous retrovirus group K member 8 Gag polyprotein (ERVK-8) from Homo sapiens (Human).